A 90-amino-acid polypeptide reads, in one-letter code: [Leu8]-phyllolitorin (90 aa).

The N-terminal stretch at 1-30 is a signal peptide; that stretch reads MSAVPFTRVLLISGFLAHLLLSTFVTLTVC. A propeptide spanning residues 31–48 is cleaved from the precursor; sequence KEVTEESDDLSKRNVLQR. Q49 carries the pyrrolidone carboxylic acid modification. M57 is modified (methionine amide). A propeptide spanning residues 61 to 90 is cleaved from the precursor; sequence SLENTNRRSDEDMEISALFRGSPLKVKRSD.

It belongs to the bombesin/neuromedin-B/ranatensin family. As to expression, expressed by the skin glands.

Its subcellular location is the secreted. In Phyllomedusa sauvagei (Sauvage's leaf frog), this protein is [Leu8]-phyllolitorin.